A 24-amino-acid chain; its full sequence is Humanin-like 9 (24 aa).

It belongs to the humanin family. As to expression, highly expressed in the kidney, heart muscle and testis.

It is found in the secreted. The protein localises to the cytoplasm. Functionally, plays a role as a neuroprotective and antiapoptotic factor. This is Humanin-like 9 from Homo sapiens (Human).